The sequence spans 118 residues: MCDKEFMWALKNGDLDEVKDYVAKGEDVNRTLEGGRKPLHYAADCGQLEILEFLLLKGADINAPDKHHITPLLSAVYEGHVSCVKLLLSKGADKTVKGPDGLTALEATDNQAIKALLQ.

Cys2 carries the post-translational modification N-acetylcysteine. An ANK 1 repeat occupies 2 to 30 (CDKEFMWALKNGDLDEVKDYVAKGEDVNR). N6-acetyllysine occurs at positions 4, 11, and 24. Position 31 is a phosphothreonine (Thr31). ANK repeat units follow at residues 34–66 (GGRK…APDK) and 67–99 (HHIT…VKGP).

Belongs to the myotrophin family. Interacts with the heterodimer formed by CAPZA1 and CAPZB. Interacts with RELA.

It is found in the cytoplasm. Its subcellular location is the nucleus. The protein localises to the perinuclear region. Functionally, plays a role in the regulation of the growth of actin filaments. Inhibits the activity of the F-actin-capping protein complex formed by the CAPZA1 and CAPZB heterodimer. Promotes dimerization of NF-kappa-B subunits and regulates NF-kappa-B transcription factor activity. Promotes growth of cardiomyocytes, but not cardiomyocyte proliferation. Promotes cardiac muscle hypertrophy. The sequence is that of Myotrophin (Mtpn) from Rattus norvegicus (Rat).